Consider the following 403-residue polypeptide: Phospholipase A1-II 2 (403 aa).

Serine 218 serves as the catalytic Acyl-ester intermediate. Active-site charge relay system residues include serine 218, aspartate 286, and histidine 323. The disordered stretch occupies residues 381–403 (GPDGRWVLQDHEPDDDDDDDDDD). Positions 392 to 403 (EPDDDDDDDDDD) are enriched in acidic residues.

The protein belongs to the AB hydrolase superfamily. Lipase family.

Its subcellular location is the cytoplasm. Functionally, acylhydrolase that catalyzes the hydrolysis of phospholipids at the sn-1 position. This chain is Phospholipase A1-II 2, found in Oryza sativa subsp. indica (Rice).